We begin with the raw amino-acid sequence, 295 residues long: Geranylfarnesyl diphosphate synthase (295 aa).

Residues Lys-51, Arg-54, and His-83 each coordinate isopentenyl diphosphate. Mg(2+)-binding residues include Asp-90 and Asp-94. Arg-99 lines the an all-trans-polyprenyl diphosphate pocket. Position 100 (Arg-100) interacts with isopentenyl diphosphate. An all-trans-polyprenyl diphosphate-binding residues include Lys-174, Thr-175, and Gln-212.

The protein belongs to the FPP/GGPP synthase family. As to quaternary structure, homodimer. Requires Mg(2+) as cofactor.

It carries out the reaction isopentenyl diphosphate + (2E,6E,10E)-geranylgeranyl diphosphate = (2E,6E,10E,14E)-geranylfarnesyl diphosphate + diphosphate. In terms of biological role, involved in biosynthesis of the polyprenyl side-chain of methanophenazine, an electron carrier utilized for methanogenesis. Catalyzes the condensation of isopentenyl pyrophosphate with the allylic pyrophosphates to yield geranylfarnesyl diphosphate (GFPP). It prefers geranylgeranyl diphosphate (GGPP) and farnesyl diphosphate (FPP) as allylic substrate. This is Geranylfarnesyl diphosphate synthase from Methanosarcina mazei (strain ATCC BAA-159 / DSM 3647 / Goe1 / Go1 / JCM 11833 / OCM 88) (Methanosarcina frisia).